The sequence spans 433 residues: ATP-dependent protease ATPase subunit HslU (433 aa).

ATP-binding positions include Val-18, 60-65 (GVGKTE), Asp-246, Glu-311, and Arg-383.

Belongs to the ClpX chaperone family. HslU subfamily. A double ring-shaped homohexamer of HslV is capped on each side by a ring-shaped HslU homohexamer. The assembly of the HslU/HslV complex is dependent on binding of ATP.

The protein localises to the cytoplasm. Functionally, ATPase subunit of a proteasome-like degradation complex; this subunit has chaperone activity. The binding of ATP and its subsequent hydrolysis by HslU are essential for unfolding of protein substrates subsequently hydrolyzed by HslV. HslU recognizes the N-terminal part of its protein substrates and unfolds these before they are guided to HslV for hydrolysis. The polypeptide is ATP-dependent protease ATPase subunit HslU (Rhodopseudomonas palustris (strain HaA2)).